The following is a 465-amino-acid chain: Cerebellar degeneration-related protein 2-like (465 aa).

Coiled coils occupy residues 38-143 and 188-265; these read LLER…EQLR and LEQE…TYLL. The tract at residues 282–314 is disordered; the sequence is APEADDPQPGRGDDLGAQDGVSSPAASPGHVVR. Phosphoserine is present on residues serine 308, serine 318, and serine 344. Positions 350–377 form a coiled coil; that stretch reads MSILREVDEQYHALLEKYEELLSKCRQH. The interval 382-417 is disordered; that stretch reads RHAGVQTSRPISRDSSWRDLRGGEEGQGEVKAGEKS. Residues 392–405 show a composition bias toward basic and acidic residues; sequence ISRDSSWRDLRGGE.

Belongs to the CDR2 family.

The polypeptide is Cerebellar degeneration-related protein 2-like (CDR2L) (Homo sapiens (Human)).